Reading from the N-terminus, the 497-residue chain is Type II secretion system protein E (497 aa).

255–262 (GPTGSGKS) provides a ligand contact to ATP. Zn(2+) contacts are provided by Cys-388, Cys-391, Cys-419, and Cys-422.

The protein belongs to the GSP E family. Forms homooligomers; most probably hexamers. Interacts with PulL/GspL. Requires Zn(2+) as cofactor.

Its subcellular location is the cell inner membrane. The enzyme catalyses ATP + H2O + cellular proteinSide 1 = ADP + phosphate + cellular proteinSide 2.. Functionally, ATPase component of the type II secretion system required for the energy-dependent secretion of extracellular factors such as proteases and toxins from the periplasm. Acts as a molecular motor to provide the energy that is required for assembly of the pseudopilus and the extrusion of substrates generated in the cytoplasm. The sequence is that of Type II secretion system protein E (pulE) from Klebsiella pneumoniae.